Reading from the N-terminus, the 78-residue chain is Small ribosomal subunit protein bS18 (78 aa).

Belongs to the bacterial ribosomal protein bS18 family. In terms of assembly, part of the 30S ribosomal subunit. Forms a tight heterodimer with protein bS6.

Binds as a heterodimer with protein bS6 to the central domain of the 16S rRNA, where it helps stabilize the platform of the 30S subunit. This chain is Small ribosomal subunit protein bS18, found in Lactobacillus delbrueckii subsp. bulgaricus (strain ATCC 11842 / DSM 20081 / BCRC 10696 / JCM 1002 / NBRC 13953 / NCIMB 11778 / NCTC 12712 / WDCM 00102 / Lb 14).